Here is a 270-residue protein sequence, read N- to C-terminus: 3-phenylpropionate-dihydrodiol/cinnamic acid-dihydrodiol dehydrogenase (270 aa).

Position 10 to 34 (10 to 34) interacts with NAD(+); that stretch reads FITGGGSGLGLALVERFIEKGAQVA. Serine 143 lines the substrate pocket. Tyrosine 156 (proton acceptor) is an active-site residue.

The protein belongs to the short-chain dehydrogenases/reductases (SDR) family.

The catalysed reaction is 3-(cis-5,6-dihydroxycyclohexa-1,3-dien-1-yl)propanoate + NAD(+) = 3-(2,3-dihydroxyphenyl)propanoate + NADH + H(+). It carries out the reaction (2E)-3-(cis-5,6-dihydroxycyclohexa-1,3-dien-1-yl)prop-2-enoate + NAD(+) = (2E)-3-(2,3-dihydroxyphenyl)prop-2-enoate + NADH + H(+). The protein operates within aromatic compound metabolism; 3-phenylpropanoate degradation. Functionally, converts 3-phenylpropionate-dihydrodiol (PP-dihydrodiol) and cinnamic acid-dihydrodiol (CI-dihydrodiol) into 3-(2,3-dihydroxylphenyl)propanoic acid (DHPP) and 2,3-dihydroxicinnamic acid (DHCI), respectively. This is 3-phenylpropionate-dihydrodiol/cinnamic acid-dihydrodiol dehydrogenase (hcaB) from Escherichia coli.